A 437-amino-acid chain; its full sequence is Sodium/bile acid cotransporter 4 (437 aa).

At 1-103 the chain is on the extracellular side; the sequence is MDGNDNVTLL…LPFWDTPLNH (103 aa). Residues Asn-6, Asn-18, and Asn-24 are each glycosylated (N-linked (GlcNAc...) asparagine). The disordered stretch occupies residues 37–82; it reads APASSAGPGPGLSLGPGPSFGFSPGPTPTPEPTTSGLAGGAASHGP. The segment covering 51-60 has biased composition (low complexity); sequence GPGPSFGFSP. Residues 104 to 124 form a helical membrane-spanning segment; it reads GLNVFVGAALCITMLGLGCTV. Residues 125–140 lie on the Cytoplasmic side of the membrane; the sequence is DVNHFGAHVRRPVGAL. Residues 141–161 traverse the membrane as a helical segment; the sequence is LAALCQFGLLPLLAFLLALAF. At 162–197 the chain is on the extracellular side; it reads KLDEVAAVAVLLCGCCPGGNLSNLMSLLVDGDMNLS. Residues Asn-181 and Asn-195 are each glycosylated (N-linked (GlcNAc...) asparagine). A helical membrane pass occupies residues 198–218; that stretch reads IIMTISSTLLALVLMPLCLWI. The Cytoplasmic portion of the chain corresponds to 219–233; the sequence is YSWAWINTPIVQLLP. The chain crosses the membrane as a helical span at residues 234-254; that stretch reads LGTVTLTLCSTLIPIGLGVFI. Residues 255-267 are Extracellular-facing; it reads RYKYSRVADYIVK. The helical transmembrane segment at 268 to 288 threads the bilayer; that stretch reads VSLWSLLVTLVVLFIMTGTML. The Cytoplasmic portion of the chain corresponds to 289–291; that stretch reads GPE. Residues 292–312 traverse the membrane as a helical segment; the sequence is LLASIPAAVYVIAIFMPLAGY. The Extracellular segment spans residues 313-360; that stretch reads ASGYGLATLFHLPPNCKRTVCLETGSQNVQLCTAILKLAFPPQFIGSM. A helical transmembrane segment spans residues 361–381; that stretch reads YMFPLLYALFQSAEAGIFVLI. Residues 382–437 are Cytoplasmic-facing; it reads YKMYGSEMLHKRDPLDEDEDTDISYKKLKEEEMADTSYGTVKAENIIMMETAQTSL.

The protein belongs to the bile acid:sodium symporter (BASS) (TC 2.A.28) family. Activated following N-terminal proteolytic cleavage by thrombin and/or proteases. In terms of tissue distribution, highly expressed in brain and small intestine, and moderately expressed in colon, heart, prostate, and testis. Very low levels were detected in kidney, liver, ovary, placenta, spleen, and thymus.

The protein resides in the cell membrane. In terms of biological role, transporter for bile acids. This is Sodium/bile acid cotransporter 4 (SLC10A4) from Homo sapiens (Human).